The chain runs to 201 residues: Large ribosomal subunit protein uL4 (201 aa).

The tract at residues 42-67 is disordered; it reads GNSAQKTRSEVSGGGKKPWNQKGTGR.

Belongs to the universal ribosomal protein uL4 family. In terms of assembly, part of the 50S ribosomal subunit.

Its function is as follows. One of the primary rRNA binding proteins, this protein initially binds near the 5'-end of the 23S rRNA. It is important during the early stages of 50S assembly. It makes multiple contacts with different domains of the 23S rRNA in the assembled 50S subunit and ribosome. Forms part of the polypeptide exit tunnel. The sequence is that of Large ribosomal subunit protein uL4 from Legionella pneumophila (strain Corby).